The primary structure comprises 541 residues: Forkhead box protein O (541 aa).

Polar residues predominate over residues Asn-118 to Pro-150. Disordered stretches follow at residues Asn-118–Thr-168 and Trp-252–Lys-291. A DNA-binding region (fork-head) is located at residues Trp-175 to Arg-268. Position 273 is a phosphothreonine (Thr-273). Ser-319 bears the Phosphoserine; by CaMK2 mark.

In terms of assembly, interacts with rle-1. Interacts with unc-43 and tax-6. Interacts with jnk-1. Interacts with ftt-2. Interacts with prmt-1. Interacts with hcf-1. Post-translationally, phosphorylated by akt-1 and/or akt-2. Phosphorylated by sgk-1. Phosphorylated by unc-43. Phosphorylated by jnk-1. Dephosphorylated by tax-6 in vitro. Ubiquitinated. Ubiquitination by rle-1 leads to proteasome-mediated degradation. In terms of processing, methylation by prmt-1 prevents phosphorylation and promotes translocation to the nucleus to allow for daf-16-dependent transcription. Isoform b and isoform c are expressed in ectoderm, muscles, intestine and neurons. Isoform b is also expressed in the pharynx. The intestine appears to be the primary site of longevity function.

It is found in the nucleus. The protein resides in the cytoplasm. Forkhead-type transcription factor. Binds to the promoters of genes that contain the daf-16/FOXO binding element (DBE), TTGTTTAC, in their regulatory region. Functions in the Insulin/IGF-1-like signaling (IIS) mediated pathway which affects lipogenesis, lifespan, starvation survival, heat shock and oxidative stress responses, sleep, associative memory, and dauer formation. Longevity signaling predominantly arises from expression in the intestine. Acts in the intestine to mediate the role of slo-1 in age-associated decline in motor activity and longevity. Transcriptional activity of daf-16/FOXO is negatively regulated by interaction with host cell factor homolog hcf-1; and by cytoplasmic sequestration by association with ftt-2. Inhibition is required for the carbon dioxide (CO2) avoidance response. Upon loss of inhibition, daf-16 translocates to the nucleus to regulate genes that result in delayed reproduction and growth while increasing stress resistance starvation tolerance and longevity. Association with arginine methyltransferase prmt-1 prevents phosphorylation and allows for translocation to the nucleus and the subsequent transcription of longevity-related genes. Modulation of its activity by cGMP levels in sensory neurons regulates lifespan. Has a protective role against muscle dystrophy. Involved in mediating protection against aberrant protein aggregation proteotoxicity. Influences transcription of genes that code for proteins involved in immunity as part of a general stress response. Targets genes that inhibit and stimulate tumor growth. Targets kinases, phosphatases and transcription factors that are primarily involved in signaling and gene regulation. Thought to regulate ins-7 in FOXO-to-FOXO signaling, which coordinates daf-16 expression. Activity is positively regulated by shc-1-mediated inhibition of daf-2 and activation of JNK pathway. Through the regulation of its activity by shc-1-mediated inhibition of daf-2 and activation of JNK pathway, plays a role in maintaining the integrity of the gonad. Functions by indirect interaction with jnk-1 of the mitogen-activated protein kinase (MAPK) pathway. Involved in increased proteasome activity by activating expression of rpn-6.1 in response to proteotoxic stress, leading to enhanced assembly of the 26S proteasome, followed by higher proteasome activity. Also regulates proteasome activity in the intestine by preventing expression of deubiquitinase ubh-4. Represses transcription of natc-1. Involved in regulation of srh-234 expression. Binds to the promoter of the AMPK-gamma regulatory subunit, aakg-4, and activates its transcription. Also activates transcription of AMPK-gamma regulatory subunit, aakg-1. Maintains endoplasmic reticulum (ER) function by inducing protein degradation and elimination to remove misfolded secretory proteins from the ER independently of the ire-1/xbp-1 unfolded protein response pathway. Regulates epidermal innate immunity to nematophagous fungal infection and physical wounding which trigger bli-3 induced ROS release, leading to daf-16 activation independently of daf-2 signaling. May negatively regulate resistance to stress caused by oxidized cholesterol adducts by preventing the activation of daf-9 and nuclear hormone receptor daf-12, two members of the steroid signaling pathway. Promotes apoptosis during embryonic development. Probably through the regulation of the autophagy genes atg-18 and atg-16.2, plays a role in regulating stem cell number in the germline during larval development. Plays a role in learning and memory; including associative memory, and aversive gustatory associated learning known as salt avoidance learning. Plays a role in regulating gene transcription in response to white light exposure. Binds to the promoter of dex-1 to positively regulate its expression in seam cells during the dauer phase. Plays a role in transgenerational lipid accumulation in response to a high-fat diet. In terms of biological role, functions in the Insulin/IGF-1-like signaling (IIS) mediated pathway. May play a role in lifespan modulation, but less significant than that played by isoforms d and f. Its function is as follows. Functions in the Insulin/IGF-1-like signaling (IIS) mediated pathway. Transcript level in the early adult may play a role in lifespan modulation, but effect is more significant than that played by isoform a. The polypeptide is Forkhead box protein O (Caenorhabditis elegans).